Reading from the N-terminus, the 241-residue chain is MQLPPVHSVSLSEYFVSGNVIIHETAVIAPGVILEAAPDCQITIEAGVCIGLGSVISAHAGDVKIQEQTAIAPGCLVIGPVTIGATACLGSRSTVFQQDIDAQVLIPPGSLLMNRVADVQTVGASSPTTDSVTEKKSPSTANPIAPIPSPWDNEPPAKGTDSPSDQAKESIARQSRPSTAEAAEQISSNRSPGESTPTAPTVVTTAPLVSEEVQEKPPVVGQVYINQLLLTLFPERRYFSS.

The interval 123–206 (GASSPTTDSV…PTAPTVVTTA (84 aa)) is disordered. Positions 185 to 195 (QISSNRSPGES) are enriched in polar residues. The segment covering 196–206 (TPTAPTVVTTA) has biased composition (low complexity). An Encapsulation peptide motif is present at residues 219-241 (VVGQVYINQLLLTLFPERRYFSS).

This sequence belongs to the CcmN family. As to quaternary structure, interacts with full-length and the N-terminal 249 residues of CcmM; a probable CcmM-CcaA-CcmN complex can also be isolated. Interacts with CcmK.

Its subcellular location is the carboxysome. Functionally, required for carboxysome formation; the N-terminus interacts with CcmM which itself binds RuBisCO (ribulose bisphosphate carboxylase, rbcL-rbcS). May also contact shell protein CcmK to help assemble the carboxysome. Its function is as follows. Beta-carboxysome assembly initiates when soluble RuBisCO is condensed into a liquid matrix in a pre-carboxysome by the RbcS-like domains of probably both forms of CcmM. CcmN interacts with the N-terminus of full-length CcmM, and then recruits the CcmK major shell protein via CcmN's encapsulation peptide. Shell formation requires CcmK proteins and CcmO. CcmL caps the otherwise elongated carboxysome. Once fully encapsulated carboxysomes are formed, they migrate within the cell probably via interactions with the cytoskeleton. The polypeptide is Carboxysome assembly protein CcmN (Synechocystis sp. (strain ATCC 27184 / PCC 6803 / Kazusa)).